Reading from the N-terminus, the 382-residue chain is MQMIKKMALSETFPGILLIFFTFLALLCKNSSLSVIYTDFFHANFTVGFVHFQISKSLDLWINDGLIAIFFLCIGLELKYEILRGQLKNIRAVSLPIFGALGGMITPALIFAAINYSYDFAMKGWAIPTATDIAFAVGILMLLGNKIPTSLKLFLLSLAIFDDLGAIVIIALFYTDQLSALAIIICLFCIFALLLLNYYHITHLSLYVLVGVVLWIAMLKSGVHATLAGVIISLFIPLDTKNKKPYLHEVLKDLNPWVVYFILPLFAFANAGIDIRDMHLGSVFSPVSLGIILGLFLGKQLGVFIFCFIAIKLKLAKLPENIKYGKFYGICILTGIGFTMSLFIDGLAYKNSDIFEHADKLAILIASFLSAIVGFIYLKIVK.

11 helical membrane-spanning segments follow: residues 7 to 27 (MALS…LALL), 58 to 78 (LDLW…GLEL), 94 to 114 (SLPI…FAAI), 124 to 144 (GWAI…MLLG), 153 to 173 (LFLL…IALF), 178 to 198 (LSAL…LLNY), 199 to 219 (YHIT…IAML), 255 to 275 (NPWV…GIDI), 291 to 311 (IILG…FIAI), 327 to 347 (FYGI…IDGL), and 361 to 381 (LAIL…LKIV).

This sequence belongs to the NhaA Na(+)/H(+) (TC 2.A.33) antiporter family.

The protein localises to the cell inner membrane. It catalyses the reaction Na(+)(in) + 2 H(+)(out) = Na(+)(out) + 2 H(+)(in). Functionally, na(+)/H(+) antiporter that extrudes sodium in exchange for external protons. In Campylobacter jejuni subsp. doylei (strain ATCC BAA-1458 / RM4099 / 269.97), this protein is Na(+)/H(+) antiporter NhaA 2.